The primary structure comprises 464 residues: Interstitial collagenase A (464 aa).

The first 17 residues, 1–17, serve as a signal peptide directing secretion; it reads MPSLPLLLLLWAASSYS. Positions 18–96 are cleaved as a propeptide — activation peptide; that stretch reads FPVFHNGDRQ…PRCGVPDVAP (79 aa). The Cysteine switch signature appears at 87–94; it reads PRCGVPDV. Cys89 contacts Zn(2+). A metalloprotease region spans residues 95-274; sequence APYAITHNNP…IQPTGATTPH (180 aa). Residue Asp155 coordinates Ca(2+). Residues His165 and Asp167 each coordinate Zn(2+). Ca(2+) contacts are provided by Asp172 and Gly173. His180 is a binding site for Zn(2+). Residues Gly187, Gly189, and Asp191 each contribute to the Ca(2+) site. Zn(2+) is bound at residue His193. Ca(2+)-binding residues include Asp195 and Glu198. N-linked (GlcNAc...) asparagine glycosylation occurs at Asn202. Position 215 (His215) interacts with Zn(2+). The active site involves Glu216. Positions 219 and 225 each coordinate Zn(2+). Hemopexin repeat units lie at residues 273 to 322 and 323 to 369; these read PHPC…WPNL and PVKL…FGFP. Cys276 and Cys464 form a disulfide bridge. Residue Asp283 coordinates Ca(2+). An N-linked (GlcNAc...) asparagine glycan is attached at Asn371. 2 Hemopexin repeats span residues 372-420 and 421-464; these read VTHI…FPGI and DDKV…WFNC. 2 residues coordinate Ca(2+): Asp376 and Asp425.

The protein belongs to the peptidase M10A family. Ca(2+) is required as a cofactor. Requires Zn(2+) as cofactor.

The protein resides in the secreted. It is found in the extracellular space. The protein localises to the extracellular matrix. The enzyme catalyses Cleavage of the triple helix of collagen at about three-quarters of the length of the molecule from the N-terminus, at 775-Gly-|-Ile-776 in the alpha1(I) chain. Cleaves synthetic substrates and alpha-macroglobulins at bonds where P1' is a hydrophobic residue.. With respect to regulation, can be activated without removal of the activation peptide. In terms of biological role, cleaves collagens of types I, II, and III at one site in the helical domain. Also cleaves collagens of types VII and X. Able to degrade synthetic peptides and type I and II fibrillar collagen. This chain is Interstitial collagenase A (Mmp1a), found in Mus musculus (Mouse).